We begin with the raw amino-acid sequence, 372 residues long: tRNA-specific 2-thiouridylase MnmA (372 aa).

ATP is bound by residues 16–23 and Met42; that span reads GMSGGVDS. The segment at 102 to 104 is interaction with target base in tRNA; sequence NPD. Cys107 acts as the Nucleophile in catalysis. A disulfide bridge connects residues Cys107 and Cys205. Gly132 lines the ATP pocket. The segment at 155–157 is interaction with tRNA; it reads KDQ. Cys205 (cysteine persulfide intermediate) is an active-site residue. The tract at residues 317 to 318 is interaction with tRNA; sequence RY.

The protein belongs to the MnmA/TRMU family.

It is found in the cytoplasm. It carries out the reaction S-sulfanyl-L-cysteinyl-[protein] + uridine(34) in tRNA + AH2 + ATP = 2-thiouridine(34) in tRNA + L-cysteinyl-[protein] + A + AMP + diphosphate + H(+). In terms of biological role, catalyzes the 2-thiolation of uridine at the wobble position (U34) of tRNA, leading to the formation of s(2)U34. This is tRNA-specific 2-thiouridylase MnmA from Shewanella sp. (strain MR-4).